A 445-amino-acid polypeptide reads, in one-letter code: Cytochrome b (445 aa).

The Cytoplasmic segment spans residues 2-49 (SGIPHDHYEPRTGIEKWLHSRLPIVALAYDTIMIPTPRNLNWMWIWGV). A helical transmembrane segment spans residues 50 to 67 (VLAFCLVLQIVTGIVLAM). Residues 68 to 94 (HYTPHVDLAFASVEHIMRNVNGGFMLR) are Periplasmic-facing. Residues 95–113 (YLHANGASLFFIAVYLHIF) traverse the membrane as a helical segment. Positions 97 and 111 each coordinate heme b. Residues 114–129 (RGLYYGSYKAPREVTW) are Cytoplasmic-facing. A helical transmembrane segment spans residues 130 to 149 (IVGMLIYLAMMATAFMGYVL). Topologically, residues 150–193 (PWGQMSFWGATVITGLFGAIPGIGHSIQTWLLGGPAVDNATLNR) are periplasmic. The helical transmembrane segment at 194 to 216 (FFSLHYLLPFVIAALVAIHIWAF) threads the bilayer. Heme b-binding residues include histidine 198 and histidine 212. The Cytoplasmic portion of the chain corresponds to 217–252 (HSTGNNNPTGVEVRRTSKAEAQKDTVPFWPYFIIKD). Residues 253 to 270 (VFALAVVLLVFFAIVGFM) traverse the membrane as a helical segment. Over 271-329 (PNYLGHPDNYIEANPLSTPAHIVPEWYFLPFYAILRAFTADVWVVQIANFISFGIIDAK) the chain is Periplasmic. A helical membrane pass occupies residues 330–346 (FFGVLAMFGAILVMALV). Residues 347 to 364 (PWLDTSPVRSGRYRPMFK) are Cytoplasmic-facing. The chain crosses the membrane as a helical span at residues 365–382 (IYFWLLAADFVILTWVGA). The Periplasmic segment spans residues 383 to 388 (QQTTFP). The chain crosses the membrane as a helical span at residues 389–408 (YDWISLIASAYWFAYFLVIL). The Cytoplasmic portion of the chain corresponds to 409–445 (PILGAIEKPVAPPATIEEDFNAHYSPATGGTKTVVAE).

This sequence belongs to the cytochrome b family. In terms of assembly, the main subunits of complex b-c1 are: cytochrome b, cytochrome c1 and the Rieske protein. It depends on heme b as a cofactor.

It is found in the cell membrane. Its function is as follows. Component of the ubiquinol-cytochrome c reductase complex (complex III or cytochrome b-c1 complex), which is a respiratory chain that generates an electrochemical potential coupled to ATP synthesis. This Cereibacter sphaeroides (Rhodobacter sphaeroides) protein is Cytochrome b (petB).